Reading from the N-terminus, the 240-residue chain is Uridylate kinase (240 aa).

13–16 (KLSG) is a binding site for ATP. Positions 21–26 (GDKGFG) are involved in allosteric activation by GTP. Residue glycine 55 participates in UMP binding. ATP-binding residues include glycine 56 and arginine 60. UMP is bound by residues aspartate 75 and 136–143 (IGNPYFST). ATP contacts are provided by asparagine 164, tyrosine 170, and aspartate 173.

Belongs to the UMP kinase family. As to quaternary structure, homohexamer.

The protein resides in the cytoplasm. It catalyses the reaction UMP + ATP = UDP + ADP. It participates in pyrimidine metabolism; CTP biosynthesis via de novo pathway; UDP from UMP (UMPK route): step 1/1. With respect to regulation, allosterically activated by GTP. Inhibited by UTP. Catalyzes the reversible phosphorylation of UMP to UDP. This Staphylococcus haemolyticus (strain JCSC1435) protein is Uridylate kinase.